The following is a 375-amino-acid chain: WAT1-related protein At1g70260 (375 aa).

Helical transmembrane passes span 10 to 30 (LVPFVAMAIMEACTIALTIMA), 41 to 61 (FVFVVYTNAFGSILLLPFSFL), 72 to 92 (IFSWPLLVRVFFLGFTGIFMF), 106 to 126 (IVVCAMGLQIPSFSFLLSIIL), 143 to 163 (MGTIVSLSGAFVEELYKGPFI), 191 to 211 (WFLGCIFLAVAVFSVSLFNVV), 225 to 245 (VASFYSIVGTIQCLLFSLFME), 259 to 278 (LYLIIATGTFGSVIRTSVHV), 289 to 309 (VPLFKPFGIFWATLFGTSFFV), and 312 to 332 (LHYGSVLGAAIAGVGYFTVSW). Positions 25–134 (ALTIMAKTAL…ILGRSKLDWR (110 aa)) constitute an EamA domain. The tract at residues 337–356 (ESEEKQSSNEERKSIKTIHH) is disordered.

Belongs to the drug/metabolite transporter (DMT) superfamily. Plant drug/metabolite exporter (P-DME) (TC 2.A.7.4) family.

It is found in the membrane. In Arabidopsis thaliana (Mouse-ear cress), this protein is WAT1-related protein At1g70260.